The primary structure comprises 282 residues: Bis(5'-nucleosyl)-tetraphosphatase, symmetrical (282 aa).

Belongs to the Ap4A hydrolase family.

It carries out the reaction P(1),P(4)-bis(5'-adenosyl) tetraphosphate + H2O = 2 ADP + 2 H(+). Its function is as follows. Hydrolyzes diadenosine 5',5'''-P1,P4-tetraphosphate to yield ADP. This is Bis(5'-nucleosyl)-tetraphosphatase, symmetrical from Klebsiella pneumoniae (strain 342).